The following is a 128-amino-acid chain: MATITREEIKEAIKSMTVLELAQLVKDLEEEFGVSAAAMVAAAPAAGGAAGAAAPAEEKTEFDVILTNAGANKINVIKVVREITGLGLKEAKDLVDGAPKPVKEGVSKDEAEQIKKKLEEAGATVEVK.

This sequence belongs to the bacterial ribosomal protein bL12 family. In terms of assembly, homodimer. Part of the ribosomal stalk of the 50S ribosomal subunit. Forms a multimeric L10(L12)X complex, where L10 forms an elongated spine to which 2 to 4 L12 dimers bind in a sequential fashion. Binds GTP-bound translation factors.

Forms part of the ribosomal stalk which helps the ribosome interact with GTP-bound translation factors. Is thus essential for accurate translation. The chain is Large ribosomal subunit protein bL12 from Sulfurihydrogenibium sp. (strain YO3AOP1).